We begin with the raw amino-acid sequence, 63 residues long: Large ribosomal subunit protein uL29 (63 aa).

The protein belongs to the universal ribosomal protein uL29 family.

In Klebsiella pneumoniae (strain 342), this protein is Large ribosomal subunit protein uL29.